A 512-amino-acid chain; its full sequence is Spastin homolog (512 aa).

At Met1–Gly274 the chain is on the cytoplasmic side. The stretch at Ile32 to Arg97 forms a coiled coil. Residues Lys110–Val182 are disordered. Residues Ala115–Asn233 are MTBD. Basic and acidic residues predominate over residues Ala137–Gly163. Positions Ile275–Gly294 form an intramembrane region, helical. Gly279–Thr286 is a binding site for ATP. Over Glu295 to Cys512 the chain is Cytoplasmic.

This sequence belongs to the AAA ATPase family. Spastin subfamily. As to quaternary structure, homohexamer. The homohexamer is stabilized by ATP-binding. The homohexamer may adopt a ring conformation through which microtubules pass prior to being severed. Interacts with microtubules. Interacts (via N-terminus) with tubulin; the interaction is direct.

Its subcellular location is the membrane. It is found in the cytoplasm. The protein resides in the cytoskeleton. The protein localises to the perinuclear region. It catalyses the reaction n ATP + n H2O + a microtubule = n ADP + n phosphate + (n+1) alpha/beta tubulin heterodimers.. ATP-dependent microtubule severing protein that specifically recognizes and cuts microtubules. Probably by regulating microtubule remodeling, plays a role in new synapse formation in GABAergic DD (Dorsal D type) neurons. The chain is Spastin homolog from Caenorhabditis elegans.